Reading from the N-terminus, the 154-residue chain is Transmembrane protein 35B (154 aa).

A signal peptide spans 1-22 (MALLLSVLRVLLGGFFALVGLA). Helical transmembrane passes span 63–83 (IAVGFLELLAGLLLVMGPPML), 85–105 (EISNLFLILLMMGAIFTLAAL), and 112–132 (CIPAIVCLGFLLLLNVGQLLA).

It belongs to the DoxX family.

It is found in the membrane. This Homo sapiens (Human) protein is Transmembrane protein 35B.